The primary structure comprises 359 residues: Cytoplasmic tRNA 2-thiolation protein 1 (359 aa).

It belongs to the TtcA family. CTU1/NCS6/ATPBD3 subfamily. As to quaternary structure, interacts with NCS2 and URM1. May act by forming a heterodimer with NCS2. Component of a large molecular weight complex of more than 250 kDa.

The protein resides in the cytoplasm. It is found in the mitochondrion. Its pathway is tRNA modification; 5-methoxycarbonylmethyl-2-thiouridine-tRNA biosynthesis. Plays a central role in 2-thiolation of mcm(5)S(2)U at tRNA wobble positions of tRNA(Lys), tRNA(Glu) and tRNA(Gln). Directly binds tRNAs and probably acts by catalyzing adenylation of tRNAs, an intermediate required for 2-thiolation. It is unclear whether it acts as a sulfurtransferase that transfers sulfur from thiocarboxylated URM1 onto the uridine of tRNAs at wobble position. Prior mcm(5) tRNA modification by the elongator complex is required for 2-thiolation. May also be involved in protein urmylation. May also be involved in protein urmylation and in invasive and pseudohyphal growth. The protein is Cytoplasmic tRNA 2-thiolation protein 1 of Saccharomyces cerevisiae (strain ATCC 204508 / S288c) (Baker's yeast).